A 117-amino-acid chain; its full sequence is Large ribosomal subunit protein bL19 (117 aa).

Belongs to the bacterial ribosomal protein bL19 family.

Its function is as follows. This protein is located at the 30S-50S ribosomal subunit interface and may play a role in the structure and function of the aminoacyl-tRNA binding site. This is Large ribosomal subunit protein bL19 from Cutibacterium acnes (strain DSM 16379 / KPA171202) (Propionibacterium acnes).